A 253-amino-acid polypeptide reads, in one-letter code: Ubiquinone/menaquinone biosynthesis C-methyltransferase UbiE (253 aa).

Residues Thr-76, Asp-97, and 125–126 (NA) each bind S-adenosyl-L-methionine.

This sequence belongs to the class I-like SAM-binding methyltransferase superfamily. MenG/UbiE family.

It catalyses the reaction a 2-demethylmenaquinol + S-adenosyl-L-methionine = a menaquinol + S-adenosyl-L-homocysteine + H(+). The enzyme catalyses a 2-methoxy-6-(all-trans-polyprenyl)benzene-1,4-diol + S-adenosyl-L-methionine = a 5-methoxy-2-methyl-3-(all-trans-polyprenyl)benzene-1,4-diol + S-adenosyl-L-homocysteine + H(+). Its pathway is quinol/quinone metabolism; menaquinone biosynthesis; menaquinol from 1,4-dihydroxy-2-naphthoate: step 2/2. It functions in the pathway cofactor biosynthesis; ubiquinone biosynthesis. Its function is as follows. Methyltransferase required for the conversion of demethylmenaquinol (DMKH2) to menaquinol (MKH2) and the conversion of 2-polyprenyl-6-methoxy-1,4-benzoquinol (DDMQH2) to 2-polyprenyl-3-methyl-6-methoxy-1,4-benzoquinol (DMQH2). This is Ubiquinone/menaquinone biosynthesis C-methyltransferase UbiE from Stenotrophomonas maltophilia (strain K279a).